Reading from the N-terminus, the 407-residue chain is Argininosuccinate synthase (407 aa).

ATP-binding positions include 13–21 (AYSGGLDTS) and A40. The L-citrulline site is built by Y91 and S96. G121 lines the ATP pocket. Residues T123, N127, and D128 each contribute to the L-aspartate site. N127 contacts L-citrulline. Residues R131, S182, S191, E267, and Y279 each coordinate L-citrulline.

Belongs to the argininosuccinate synthase family. Type 1 subfamily. Homotetramer.

It localises to the cytoplasm. It catalyses the reaction L-citrulline + L-aspartate + ATP = 2-(N(omega)-L-arginino)succinate + AMP + diphosphate + H(+). It functions in the pathway amino-acid biosynthesis; L-arginine biosynthesis; L-arginine from L-ornithine and carbamoyl phosphate: step 2/3. The chain is Argininosuccinate synthase from Bartonella bacilliformis (strain ATCC 35685 / KC583 / Herrer 020/F12,63).